The chain runs to 140 residues: Nucleoside diphosphate kinase (140 aa).

ATP contacts are provided by K11, F59, R87, T93, R104, and N114. H117 (pros-phosphohistidine intermediate) is an active-site residue.

This sequence belongs to the NDK family. As to quaternary structure, homotetramer. It depends on Mg(2+) as a cofactor.

It is found in the cytoplasm. The enzyme catalyses a 2'-deoxyribonucleoside 5'-diphosphate + ATP = a 2'-deoxyribonucleoside 5'-triphosphate + ADP. The catalysed reaction is a ribonucleoside 5'-diphosphate + ATP = a ribonucleoside 5'-triphosphate + ADP. Functionally, major role in the synthesis of nucleoside triphosphates other than ATP. The ATP gamma phosphate is transferred to the NDP beta phosphate via a ping-pong mechanism, using a phosphorylated active-site intermediate. In Sinorhizobium medicae (strain WSM419) (Ensifer medicae), this protein is Nucleoside diphosphate kinase.